The primary structure comprises 364 residues: Anhydro-N-acetylmuramic acid kinase (364 aa).

Residue 11-18 (GSSLDGID) participates in ATP binding.

Belongs to the anhydro-N-acetylmuramic acid kinase family.

The catalysed reaction is 1,6-anhydro-N-acetyl-beta-muramate + ATP + H2O = N-acetyl-D-muramate 6-phosphate + ADP + H(+). The protein operates within amino-sugar metabolism; 1,6-anhydro-N-acetylmuramate degradation. It functions in the pathway cell wall biogenesis; peptidoglycan recycling. Functionally, catalyzes the specific phosphorylation of 1,6-anhydro-N-acetylmuramic acid (anhMurNAc) with the simultaneous cleavage of the 1,6-anhydro ring, generating MurNAc-6-P. Is required for the utilization of anhMurNAc either imported from the medium or derived from its own cell wall murein, and thus plays a role in cell wall recycling. The protein is Anhydro-N-acetylmuramic acid kinase of Pseudomonas syringae pv. tomato (strain ATCC BAA-871 / DC3000).